A 267-amino-acid chain; its full sequence is Kafirin PSK8 (267 aa).

An N-terminal signal peptide occupies residues 1–19 (TKIFALLALHALLVSGTTA).

The protein belongs to the zein family.

Major seed storage prolamin. The polypeptide is Kafirin PSK8 (Sorghum bicolor (Sorghum)).